A 331-amino-acid polypeptide reads, in one-letter code: Bifunctional nuclease (331 aa).

In terms of domain architecture, BFN spans 126 to 261; the sequence is CVQNNPRVLR…RIAYNNGLKV (136 aa). The region spanning 291–326 is the UVR domain; sequence EAQEFDLVRNMLVAAVEERYKDAAQYRDQLFMFRAK.

It belongs to the bifunctional nuclease family.

Its subcellular location is the nucleus. Bifunctional nuclease with both RNase and DNase activities. Involved in basal defense response. Participates in abscisic acid-derived callose deposition following infection by a necrotrophic pathogen. In Oryza minuta, this protein is Bifunctional nuclease (BBD).